The primary structure comprises 20 residues: Hemocyanin subunit II (20 aa).

Positions 1 to 20 (DVVASSTAHKQQDINHLLDK) are disordered. Residues 10–20 (KQQDINHLLDK) show a composition bias toward basic and acidic residues.

The protein belongs to the tyrosinase family. Hemocyanin subfamily. As to quaternary structure, composed of 3 major subunits (IB, II and III) and 1 minor subunit (IA) which form homohexamers and heterohexamers. May also form larger structures. Hemolymph.

The protein resides in the secreted. It is found in the extracellular space. Its function is as follows. Hemocyanins are copper-containing oxygen carriers occurring freely dissolved in the hemolymph of many mollusks and arthropods. The polypeptide is Hemocyanin subunit II (Panulirus japonicus (Japanese spiny lobster)).